The following is a 203-amino-acid chain: Glycerol-3-phosphate acyltransferase (203 aa).

The next 6 helical transmembrane spans lie at 5 to 25, 50 to 70, 72 to 92, 115 to 135, 140 to 160, and 162 to 182; these read IASIALVLLAYLSGSIPFSLL, TCGFSAFALAMGGDMLKGALP, IAAQALGLSPLAVVIVGTAAM, VVLTLAPLVALPGLAAWAVTF, ISAVASLTAAAVCGIAAAVLL, and LGMLPPAYAIFVWGAVAAIVF.

It belongs to the PlsY family. Probably interacts with PlsX.

Its subcellular location is the cell membrane. The catalysed reaction is an acyl phosphate + sn-glycerol 3-phosphate = a 1-acyl-sn-glycero-3-phosphate + phosphate. It functions in the pathway lipid metabolism; phospholipid metabolism. Functionally, catalyzes the transfer of an acyl group from acyl-phosphate (acyl-PO(4)) to glycerol-3-phosphate (G3P) to form lysophosphatidic acid (LPA). This enzyme utilizes acyl-phosphate as fatty acyl donor, but not acyl-CoA or acyl-ACP. The sequence is that of Glycerol-3-phosphate acyltransferase from Roseiflexus sp. (strain RS-1).